The chain runs to 717 residues: Segment polarity protein dishevelled homolog DVL-3 (717 aa).

The region spanning 1-82 (MGETKVIYHL…RVVCWLVSAD (82 aa)) is the DIX domain. Residues 89–235 (GSVCADIQSD…PQIERSSSFS (147 aa)) are disordered. A compositionally biased stretch (polar residues) spans 118–127 (HPNTRGSQEN). A compositionally biased stretch (basic and acidic residues) spans 140 to 155 (ARRERPGRKETSEHAT). Over residues 173–189 (ESSSTLMSSELDSTSFF) the composition is skewed to low complexity. Over residues 199–210 (RFSNSTEQSSAS) the composition is skewed to polar residues. The span at 212–224 (LMRRHKRRRRKPK) shows a compositional bias: basic residues. Positions 248–333 (TVTLNMEKYN…KPGPITLTVA (86 aa)) constitute a PDZ domain. Positions 421–495 (SESGLEVRDR…SEQCYYIFGD (75 aa)) constitute a DEP domain. Residues 552 to 653 (PDPAYIYGGG…THQSFGPPGI (102 aa)) are disordered. Positions 564 to 579 (GSQHSEGSRSSGSNRS) are enriched in low complexity. 2 stretches are compositionally biased toward basic and acidic residues: residues 580 to 593 (STEK…KGGD) and 602 to 618 (ESDH…RAAS). Residues 629 to 645 (HRSHHSIAHSIRSHHTH) are compositionally biased toward basic residues.

Belongs to the DSH family. As to expression, expressed throughout the epidermis.

The protein resides in the cytoplasm. Functionally, involved in the signal transduction pathway mediated by multiple Wnt genes. Required during ciliogenesis for the docking of basal bodies to the apical plasma membrane. This chain is Segment polarity protein dishevelled homolog DVL-3, found in Xenopus laevis (African clawed frog).